A 146-amino-acid polypeptide reads, in one-letter code: Glycosylation-dependent cell adhesion molecule 1 (146 aa).

An N-terminal signal peptide occupies residues 1–19 (MKFFTVLLFASLAATSLAA). The segment at 25 to 112 (DELHLRTQPT…SAATSEGKLT (88 aa)) is disordered. Basic and acidic residues predominate over residues 48–60 (ISKESTSSKDLSK). Ser-54, Ser-59, and Ser-71 each carry phosphoserine. The span at 74–106 (NVGTESTKPQSQEAQDGLRSGSSQQEETTSAAT) shows a compositional bias: polar residues.

The protein belongs to the PP3/GlyCAM-1 family. Extensively O-glycosylated. Lymph nodes. Associated with the lumenal surface of the high endothelial venules of peripheral lymph nodes.

Its subcellular location is the cell membrane. In terms of biological role, adhesion molecule that accomplishes cell binding by presenting carbohydrate(s) to the lectin domain of L-selectin. The polypeptide is Glycosylation-dependent cell adhesion molecule 1 (Glycam1) (Rattus norvegicus (Rat)).